Here is a 332-residue protein sequence, read N- to C-terminus: Small ribosomal subunit protein uS2 (332 aa).

This sequence belongs to the universal ribosomal protein uS2 family.

The chain is Small ribosomal subunit protein uS2 from Afipia carboxidovorans (strain ATCC 49405 / DSM 1227 / KCTC 32145 / OM5) (Oligotropha carboxidovorans).